An 87-amino-acid polypeptide reads, in one-letter code: MCLSCQFWCLECQESGVGCRCVDCCSCLQCAAGCQGAPKRSQPEAGVASAAVTIQPSGALNNAPREPSAPPLSQTLSPRQVLARYQM.

The disordered stretch occupies residues 58 to 87; sequence GALNNAPREPSAPPLSQTLSPRQVLARYQM. The short motif at 67–70 is the PTAP/PSAP motif element; it reads PSAP.

This sequence belongs to the hepevirus ORF3 protein family. Post-translationally, palmitoylated in the N-terminus.

It is found in the host endoplasmic reticulum membrane. It localises to the host cytoplasm. Its subcellular location is the host cytoskeleton. The protein localises to the virion. The protein resides in the host cell membrane. In terms of biological role, small multifunctional phosphoprotein involved in virion morphogenesis, egress and counteracting host innate immunity. The protein is Protein ORF3 of Avian hepatitis E virus (isolate Chicken/California/Meng) (AHEV).